The chain runs to 959 residues: Outer capsid protein VP2 (959 aa).

This sequence belongs to the orbivirus VP2 family.

It is found in the virion. In terms of biological role, the VP2 protein is one of the two proteins (with VP5) which constitute the virus particle outer capsid. It is the major target of the host immunogenic response. Responsible for viral attachment to target host cell, probably by binding to sialic acid. This attachment induces virion internalization predominantly through clathrin-dependent endocytosis. The protein is Outer capsid protein VP2 (Segment-2) of Antilocapra americana (Pronghorn).